A 673-amino-acid chain; its full sequence is B3 domain-containing protein Os01g0905400 (673 aa).

Over residues 1–34 (MVELIKVPKIEQEEGNADSHGKEKADVVHEEKTE) the composition is skewed to basic and acidic residues. The tract at residues 1-44 (MVELIKVPKIEQEEGNADSHGKEKADVVHEEKTEKVKRRRKRVS) is disordered. Positions 79-172 (LPSFFKIMVG…VFTVQIFAIS (94 aa)) form a DNA-binding region, TF-B3 1. The tract at residues 315–337 (PSFSYPESSNVMTADKESERSHQ) is disordered. The segment covering 328–337 (ADKESERSHQ) has biased composition (basic and acidic residues). The segment at residues 576–671 (SKKFCITIPP…ELSFQVLVPN (96 aa)) is a DNA-binding region (TF-B3 2).

It localises to the nucleus. This is B3 domain-containing protein Os01g0905400 from Oryza sativa subsp. japonica (Rice).